The primary structure comprises 329 residues: Calponin-3 (329 aa).

An N6-acetyllysine modification is found at Lys-23. The region spanning 26–130 (HQAEEDLRNW…TLVALAGLAK (105 aa)) is the Calponin-homology (CH) domain. Lys-158 carries the N6-methyllysine modification. Calponin-like repeat units follow at residues 164–189 (IGLQ…RHLY), 204–229 (ISLQ…RDIY), and 243–268 (ISLQ…RQVY). A disordered region spans residues 280 to 329 (VIHNGSQGTGTNGSEISDSDYQAEYPDEYHGEYQDDYPRDYQYGDQGIDY). Residues 306-318 (DEYHGEYQDDYPR) show a composition bias toward basic and acidic residues.

The protein belongs to the calponin family.

Its function is as follows. Thin filament-associated protein that is implicated in the regulation and modulation of smooth muscle contraction. It is capable of binding to actin, calmodulin and tropomyosin. The interaction of calponin with actin inhibits the actomyosin Mg-ATPase activity. This chain is Calponin-3 (CNN3), found in Bos taurus (Bovine).